Reading from the N-terminus, the 72-residue chain is Translation initiation factor IF-1 (72 aa).

The region spanning 1–72 (MAKEDVIEVE…TRGRITYRFK (72 aa)) is the S1-like domain.

It belongs to the IF-1 family. In terms of assembly, component of the 30S ribosomal translation pre-initiation complex which assembles on the 30S ribosome in the order IF-2 and IF-3, IF-1 and N-formylmethionyl-tRNA(fMet); mRNA recruitment can occur at any time during PIC assembly.

It is found in the cytoplasm. Its function is as follows. One of the essential components for the initiation of protein synthesis. Stabilizes the binding of IF-2 and IF-3 on the 30S subunit to which N-formylmethionyl-tRNA(fMet) subsequently binds. Helps modulate mRNA selection, yielding the 30S pre-initiation complex (PIC). Upon addition of the 50S ribosomal subunit IF-1, IF-2 and IF-3 are released leaving the mature 70S translation initiation complex. This Listeria innocua serovar 6a (strain ATCC BAA-680 / CLIP 11262) protein is Translation initiation factor IF-1.